Reading from the N-terminus, the 247-residue chain is NAD(P)H-quinone oxidoreductase subunit K (247 aa).

[4Fe-4S] cluster contacts are provided by Cys-63, Cys-64, Cys-128, and Cys-159.

This sequence belongs to the complex I 20 kDa subunit family. As to quaternary structure, NDH-1 can be composed of about 15 different subunits; different subcomplexes with different compositions have been identified which probably have different functions. The cofactor is [4Fe-4S] cluster.

The protein localises to the cellular thylakoid membrane. The enzyme catalyses a plastoquinone + NADH + (n+1) H(+)(in) = a plastoquinol + NAD(+) + n H(+)(out). It carries out the reaction a plastoquinone + NADPH + (n+1) H(+)(in) = a plastoquinol + NADP(+) + n H(+)(out). In terms of biological role, NDH-1 shuttles electrons from an unknown electron donor, via FMN and iron-sulfur (Fe-S) centers, to quinones in the respiratory and/or the photosynthetic chain. The immediate electron acceptor for the enzyme in this species is believed to be plastoquinone. Couples the redox reaction to proton translocation, and thus conserves the redox energy in a proton gradient. Cyanobacterial NDH-1 also plays a role in inorganic carbon-concentration. The polypeptide is NAD(P)H-quinone oxidoreductase subunit K (Gloeothece citriformis (strain PCC 7424) (Cyanothece sp. (strain PCC 7424))).